The following is a 243-amino-acid chain: MLTFLIPTAKEMVIPKESYPHLLPQPSQAILKAMAAMTTEDLAKAYRIKEEAAKKEQQRWQDMTSQQSLAYPAYQLFNGLMYRHIKRDKLTTQEQAYLTQQVYITSSFYGIIPANHPIAEHRHDFHTRIKIEGQSLKSYWRPCYNQFAKEHPQVISLLSSEFDDVFSKDCKQLWIGPKFMAEKEGQFKTHSTISKKARGAFLTACMENNCQTVDSLKSLVFAGFYYHPDLSTDHEFVYIKKEA.

It belongs to the UPF0246 family.

The chain is UPF0246 protein MGAS10750_Spy1880 from Streptococcus pyogenes serotype M4 (strain MGAS10750).